A 67-amino-acid polypeptide reads, in one-letter code: Protein AaeX (67 aa).

The next 2 membrane-spanning stretches (helical) occupy residues 8 to 28 and 47 to 67; these read VLFG…LPLF and PALF…WLFI.

It belongs to the AaeX family.

Its subcellular location is the cell membrane. In Edwardsiella piscicida, this protein is Protein AaeX.